Consider the following 741-residue polypeptide: Phosphoribosylformylglycinamidine synthase subunit PurL (741 aa).

Residue H54 is part of the active site. Residues Y57 and K98 each contribute to the ATP site. E100 provides a ligand contact to Mg(2+). Substrate-binding positions include 101–104 (SHNH) and R123. Residue H102 is the Proton acceptor of the active site. D124 contacts Mg(2+). Q251 contributes to the substrate binding site. A Mg(2+)-binding site is contributed by D279. Position 323-325 (323-325 (ESQ)) interacts with substrate. The ATP site is built by D510 and G547. A Mg(2+)-binding site is contributed by N548. Residue S550 coordinates substrate.

The protein belongs to the FGAMS family. Monomer. Part of the FGAM synthase complex composed of 1 PurL, 1 PurQ and 2 PurS subunits.

It localises to the cytoplasm. It carries out the reaction N(2)-formyl-N(1)-(5-phospho-beta-D-ribosyl)glycinamide + L-glutamine + ATP + H2O = 2-formamido-N(1)-(5-O-phospho-beta-D-ribosyl)acetamidine + L-glutamate + ADP + phosphate + H(+). The protein operates within purine metabolism; IMP biosynthesis via de novo pathway; 5-amino-1-(5-phospho-D-ribosyl)imidazole from N(2)-formyl-N(1)-(5-phospho-D-ribosyl)glycinamide: step 1/2. In terms of biological role, part of the phosphoribosylformylglycinamidine synthase complex involved in the purines biosynthetic pathway. Catalyzes the ATP-dependent conversion of formylglycinamide ribonucleotide (FGAR) and glutamine to yield formylglycinamidine ribonucleotide (FGAM) and glutamate. The FGAM synthase complex is composed of three subunits. PurQ produces an ammonia molecule by converting glutamine to glutamate. PurL transfers the ammonia molecule to FGAR to form FGAM in an ATP-dependent manner. PurS interacts with PurQ and PurL and is thought to assist in the transfer of the ammonia molecule from PurQ to PurL. This is Phosphoribosylformylglycinamidine synthase subunit PurL from Picrophilus torridus (strain ATCC 700027 / DSM 9790 / JCM 10055 / NBRC 100828 / KAW 2/3).